Reading from the N-terminus, the 545-residue chain is Glucose-6-phosphate isomerase (545 aa).

The active-site Proton donor is E351. Active-site residues include H382 and K510.

It belongs to the GPI family.

Its subcellular location is the cytoplasm. The catalysed reaction is alpha-D-glucose 6-phosphate = beta-D-fructose 6-phosphate. Its pathway is carbohydrate biosynthesis; gluconeogenesis. It functions in the pathway carbohydrate degradation; glycolysis; D-glyceraldehyde 3-phosphate and glycerone phosphate from D-glucose: step 2/4. In terms of biological role, catalyzes the reversible isomerization of glucose-6-phosphate to fructose-6-phosphate. The chain is Glucose-6-phosphate isomerase from Shewanella sediminis (strain HAW-EB3).